The chain runs to 454 residues: Mannosylfructose-phosphate synthase (454 aa).

It belongs to the glycosyltransferase 1 family. It depends on Mg(2+) as a cofactor. Mn(2+) serves as cofactor.

The catalysed reaction is beta-D-fructose 6-phosphate + GDP-alpha-D-mannose = beta-D-fructofuranosyl alpha-D-mannopyranoside 6(F)-phosphate + GDP + H(+). The protein operates within carbohydrate metabolism; mannosylfructose biosynthesis; beta-D-fructofuranosyl alpha-D-mannopyranoside from D-fructose 6-phosphate and GDP-alpha-D-mannose: step 1/2. This Agrobacterium fabrum (strain C58 / ATCC 33970) (Agrobacterium tumefaciens (strain C58)) protein is Mannosylfructose-phosphate synthase.